Reading from the N-terminus, the 144-residue chain is 3-hydroxyacyl-[acyl-carrier-protein] dehydratase FabZ (144 aa).

Histidine 51 is an active-site residue.

The protein belongs to the thioester dehydratase family. FabZ subfamily.

It localises to the cytoplasm. It carries out the reaction a (3R)-hydroxyacyl-[ACP] = a (2E)-enoyl-[ACP] + H2O. Involved in unsaturated fatty acids biosynthesis. Catalyzes the dehydration of short chain beta-hydroxyacyl-ACPs and long chain saturated and unsaturated beta-hydroxyacyl-ACPs. This Clostridium botulinum (strain Okra / Type B1) protein is 3-hydroxyacyl-[acyl-carrier-protein] dehydratase FabZ.